Here is a 105-residue protein sequence, read N- to C-terminus: Small ribosomal subunit protein uS14m (105 aa).

This sequence belongs to the universal ribosomal protein uS14 family. As to quaternary structure, component of the mitochondrial small ribosomal subunit (mt-SSU). Mature yeast 74S mitochondrial ribosomes consist of a small (37S) and a large (54S) subunit. The 37S small subunit contains a 15S ribosomal RNA (15S mt-rRNA) and at least 32 different proteins. The 54S large subunit contains a 21S rRNA (21S mt-rRNA) and at least 45 different proteins.

It is found in the mitochondrion. Component of the mitochondrial ribosome (mitoribosome), a dedicated translation machinery responsible for the synthesis of mitochondrial genome-encoded proteins, including at least some of the essential transmembrane subunits of the mitochondrial respiratory chain. The mitoribosomes are attached to the mitochondrial inner membrane and translation products are cotranslationally integrated into the membrane. This is Small ribosomal subunit protein uS14m (mrp2) from Schizosaccharomyces pombe (strain 972 / ATCC 24843) (Fission yeast).